The following is a 243-amino-acid chain: MIRLIFLDIDKTLIPGYEPDPAKPIIEELKDMGFEIIFNSSKTRAEQEYYRKELEVETPFISENGSAIFIPKGYFPFDVKGKEVGNYIVIELGIRVEKIREELKKLENIYGLKYYGNSTKEEIEKFTGMPPELVPLAMEREYSETIFEWSRDGWEEVLVEGGFKVTMGSRFYTVHGNSDKGKAAKILLDFYKRLGQIESYAVGDSYNDFPMFEVVDKAFIVGSLKHKKAQNVSSIIDVLEVIK.

Asp-8 functions as the Nucleophile in the catalytic mechanism. Residues Asp-8, Asp-10, Ser-169, and Asp-204 each coordinate Mg(2+).

It belongs to the HAD-like hydrolase superfamily. MPGP family. The cofactor is Mg(2+).

The protein resides in the cytoplasm. The enzyme catalyses 2-O-(alpha-D-mannosyl)-3-phosphoglycerate + H2O = (2R)-2-O-(alpha-D-mannosyl)-glycerate + phosphate. It participates in carbohydrate biosynthesis; 2-(alpha-D-mannosyl)-D-glycerate biosynthesis; 2-(alpha-D-mannosyl)-D-glycerate from GDP-alpha-D-mannose (MPG route): step 2/2. Functionally, hydrolyzes mannosyl-3-phosphoglycerate (MPG) to form the osmolyte mannosylglycerate (MG). The enzyme is absolutely specific for MPG. This Pyrococcus horikoshii (strain ATCC 700860 / DSM 12428 / JCM 9974 / NBRC 100139 / OT-3) protein is Mannosyl-3-phosphoglycerate phosphatase.